The sequence spans 555 residues: Developmental and secondary metabolism regulator veA (555 aa).

Disordered regions lie at residues 1 to 23 (MATR…RITR), 39 to 60 (ERAR…VDPP), and 234 to 533 (RRRG…TLLS). A compositionally biased stretch (basic and acidic residues) spans 13–23 (ETEHSVSRITR). The Velvet domain maps to 25 to 228 (GKRITYKLNV…AEQGCRVRIR (204 aa)). The short motif at 39–44 (ERARAC) is the Nuclear localization signal element. Residues 239–258 (KRSDDYDFDEERSHRGRIPD) are compositionally biased toward basic and acidic residues. Over residues 311–331 (AIPPAPAPAPPSSSTPTPVAP) the composition is skewed to pro residues. Polar residues-rich tracts occupy residues 336–372 (RSSS…TQVY) and 380–389 (HARNPSTSTE). The PEST stretch occupies residues 439–479 (QTPSNAAPSLPPIASISAEYSNNLPQPPSNLAPSPNREPRG). Composition is skewed to basic and acidic residues over residues 492-503 (RPHEDAFSHSER) and 519-533 (ADRR…TLLS).

Belongs to the velvet family. VeA subfamily. As to quaternary structure, component of the heterotrimeric velvet complex composed of laeA, veA and velB; VeA acting as a bridging protein between laeA and velB.

Its subcellular location is the nucleus. It is found in the cytoplasm. Its function is as follows. Component of the velvet transcription factor complex that controls sexual/asexual developmental ratio in response to light, promoting sexual development in the darkness while stimulating asexual sporulation under illumination. The velvet complex hat acts as a global regulator for secondary metabolite gene expression. Increases spore dispersing capacity by impacting conidiophore architecture. The sequence is that of Developmental and secondary metabolism regulator veA from Aspergillus niger (strain ATCC 1015 / CBS 113.46 / FGSC A1144 / LSHB Ac4 / NCTC 3858a / NRRL 328 / USDA 3528.7).